A 1118-amino-acid polypeptide reads, in one-letter code: Receptor-type guanylate cyclase gcy-2 (1118 aa).

A signal peptide spans 1–21; it reads MVSSILKFVILIHSTFHSTFA. Over 22 to 494 the chain is Extracellular; sequence QNLPDTTVAP…FCPISFWEQY (473 aa). Residues N222, N351, N361, N387, N420, and N452 are each glycosylated (N-linked (GlcNAc...) asparagine). A helical membrane pass occupies residues 495–515; sequence MILAIVSISVIVLMVIIMIIG. Residues 516–1118 are Cytoplasmic-facing; it reads CLCVISAKHA…FKMDTLKVAN (603 aa). Residues 558-875 enclose the Protein kinase domain; it reads LQSAPSISTG…EGFDSVTVFF (318 aa). Residues 872 to 1002 form the Guanylate cyclase domain; it reads TVFFSDVVKF…DTVNTASRME (131 aa). Residues 1076–1103 form a disordered region; that stretch reads WITPPAPKPEIRSVSSHGSRPPSVYDPL.

Belongs to the adenylyl cyclase class-4/guanylyl cyclase family. Expressed bilaterally in AWA and ASI sensory neurons and in RIA and PVT interneurons.

Its subcellular location is the cell membrane. The enzyme catalyses GTP = 3',5'-cyclic GMP + diphosphate. Functionally, guanylate cyclase involved in the production of the second messenger cGMP. The protein is Receptor-type guanylate cyclase gcy-2 of Caenorhabditis elegans.